We begin with the raw amino-acid sequence, 143 residues long: Cofilin (143 aa).

The 133-residue stretch at 5–137 folds into the ADF-H domain; the sequence is GVAVSDEALK…AYESVLEKIS (133 aa).

Belongs to the actin-binding proteins ADF family.

It is found in the cytoplasm. It localises to the cytoskeleton. The protein localises to the nucleus matrix. Controls reversibly actin polymerization and depolymerization in a pH-sensitive manner. It has the ability to bind G- and F-actin in a 1:1 ratio of cofilin to actin. Binding to F-actin is regulated by tropomyosin. It is the major component of intranuclear and cytoplasmic actin rods. Required for accumulation of actin at the cell division site via depolymerizing actin at the cell ends. In association with myosin II has a role in the assembly of the contractile ring via severing actin filaments. Involved in the maintenance of the contractile ring once formed. In association with profilin and capping protein, has a role in the mitotic reorganization of the actin cytoskeleton. This is Cofilin (COF1) from Ogataea parapolymorpha (strain ATCC 26012 / BCRC 20466 / JCM 22074 / NRRL Y-7560 / DL-1) (Yeast).